Consider the following 515-residue polypeptide: 2-isopropylmalate synthase (515 aa).

Residues 5–267 (VIIFDTTLRD…DTHINTQEIH (263 aa)) enclose the Pyruvate carboxyltransferase domain. Positions 14, 202, 204, and 238 each coordinate Mn(2+). The segment at 392-515 (VLDKLSAHST…VADIKNHKHH (124 aa)) is regulatory domain.

The protein belongs to the alpha-IPM synthase/homocitrate synthase family. LeuA type 1 subfamily. As to quaternary structure, homodimer. It depends on Mn(2+) as a cofactor.

The protein resides in the cytoplasm. It carries out the reaction 3-methyl-2-oxobutanoate + acetyl-CoA + H2O = (2S)-2-isopropylmalate + CoA + H(+). It participates in amino-acid biosynthesis; L-leucine biosynthesis; L-leucine from 3-methyl-2-oxobutanoate: step 1/4. In terms of biological role, catalyzes the condensation of the acetyl group of acetyl-CoA with 3-methyl-2-oxobutanoate (2-ketoisovalerate) to form 3-carboxy-3-hydroxy-4-methylpentanoate (2-isopropylmalate). The protein is 2-isopropylmalate synthase of Haemophilus influenzae (strain ATCC 51907 / DSM 11121 / KW20 / Rd).